Consider the following 147-residue polypeptide: TRAF-interacting protein with FHA domain-containing protein B (147 aa).

Residues 36 to 108 form the FHA domain; that stretch reads LLVGRGQDTH…LHSVNRISFS (73 aa).

As to quaternary structure, interacts with TIFA.

Functionally, inhibits TIFA-mediated TRAF6 activation possibly by inducing a conformational change in TIFA. This is TRAF-interacting protein with FHA domain-containing protein B from Rattus norvegicus (Rat).